The following is a 24-amino-acid chain: N-acyl-L-amino acid amidohydrolase (24 aa).

This sequence belongs to the peptidase M20 family. As to quaternary structure, homotetramer. The cofactor is Co(2+).

The enzyme catalyses an N-acyl-L-amino acid + H2O = an L-alpha-amino acid + a carboxylate. The catalysed reaction is an N-acetyl-L-cysteine-S-conjugate + H2O = an S-substituted L-cysteine + acetate. The polypeptide is N-acyl-L-amino acid amidohydrolase (Parageobacillus thermoglucosidasius (Geobacillus thermoglucosidasius)).